The chain runs to 98 residues: uncharacterized protein (98 aa).

Residues 1-21 (MTTSPTTISTTTAATTTTTTP) show a composition bias toward low complexity. The tract at residues 1-26 (MTTSPTTISTTTAATTTTTTPGKGTD) is disordered. A helical membrane pass occupies residues 29–49 (MVYIEAMLFSMLVLILLIIVC).

The protein resides in the host membrane. This is an uncharacterized protein from Equine herpesvirus 2 (strain 86/87) (EHV-2).